The sequence spans 273 residues: ATP synthase subunit a (273 aa).

A run of 7 helical transmembrane segments spans residues 34–54 (IINM…CLFM), 94–114 (FIAP…SLDF), 115–135 (LPVD…LITH), 143–163 (DLNG…FYNI), 171–191 (FVHE…NLLL), 218–238 (FLLI…GHVV), and 244–264 (AIFH…LTLV).

The protein belongs to the ATPase A chain family. In terms of assembly, F-type ATPases have 2 components, CF(1) - the catalytic core - and CF(0) - the membrane proton channel. CF(1) has five subunits: alpha(3), beta(3), gamma(1), delta(1), epsilon(1). CF(0) has three main subunits: a(1), b(2) and c(9-12). The alpha and beta chains form an alternating ring which encloses part of the gamma chain. CF(1) is attached to CF(0) by a central stalk formed by the gamma and epsilon chains, while a peripheral stalk is formed by the delta and b chains.

It is found in the cell inner membrane. Functionally, key component of the proton channel; it plays a direct role in the translocation of protons across the membrane. In Janthinobacterium sp. (strain Marseille) (Minibacterium massiliensis), this protein is ATP synthase subunit a.